A 284-amino-acid polypeptide reads, in one-letter code: Peflin (284 aa).

Positions 1–111 are disordered; it reads MASYPYRQGC…QPGLYGQGGA (111 aa). The span at 8–26 shows a compositional bias: low complexity; that stretch reads QGCPGAAGQAPGAPPGSYY. Repeat copies occupy residues 21–29, 31–39, 41–49, 50–58, 59–67, 76–84, 85–92, 93–100, and 101–109. The tract at residues 21–109 is 9 X 9 AA approximate tandem repeat of [AP]-P-G-G-P-Y-G-G-P-P; sequence PPGSYYPGPP…AQQPGLYGQG (89 aa). Residues 34 to 50 show a composition bias toward gly residues; that stretch reads GQYGSGLPPGGGYGGPA. Residues 65–75 are compositionally biased toward low complexity; sequence GHPNPGMFPSG. Residues 76 to 90 show a composition bias toward gly residues; that stretch reads TPGGPYGGAAPGGPY. 5 EF-hand domains span residues 114–149, 155–183, 181–216, 217–253, and 254–283; these read NVDP…CNWS, TCLM…WKFI, KFIQ…MGYN, LSPQ…LQVL, and TEAF…ASRM. Ca(2+) contacts are provided by aspartate 127, aspartate 129, serine 131, and tyrosine 133. Lysine 137 is covalently cross-linked (Glycyl lysine isopeptide (Lys-Gly) (interchain with G-Cter in ubiquitin)). Position 138 (glutamate 138) interacts with Ca(2+). Residues aspartate 194, aspartate 196, serine 198, serine 200, and glutamate 205 each contribute to the Ca(2+) site. Residues 204-284 are required for interaction with PDCD6; that stretch reads TELQQALSQM…FVTMTASRML (81 aa).

Heterodimer; heterodimerizes (via the EF-hand 5) with PDCD6. Dissociates from PDCD6 in presence of calcium. Ubiquitinated by the BCR(KLHL12) E3 ubiquitin ligase complex.

It is found in the cytoplasm. The protein resides in the endoplasmic reticulum. It localises to the membrane. The protein localises to the cytoplasmic vesicle. Its subcellular location is the COPII-coated vesicle membrane. Calcium-binding protein that acts as an adapter that bridges unrelated proteins or stabilizes weak protein-protein complexes in response to calcium. Together with PDCD6, acts as a calcium-dependent adapter for the BCR(KLHL12) complex, a complex involved in endoplasmic reticulum (ER)-Golgi transport by regulating the size of COPII coats. In response to cytosolic calcium increase, the heterodimer formed with PDCD6 interacts with, and bridges together the BCR(KLHL12) complex and SEC31 (SEC31A or SEC31B), promoting monoubiquitination of SEC31 and subsequent collagen export, which is required for neural crest specification. Its role in the heterodimer formed with PDCD6 is however unclear: some evidence shows that PEF1 and PDCD6 work together and promote association between PDCD6 and SEC31 in presence of calcium. Other reports show that PEF1 dissociates from PDCD6 in presence of calcium, and may act as a negative regulator of PDCD6. Also acts as a negative regulator of ER-Golgi transport; possibly by inhibiting interaction between PDCD6 and SEC31. The sequence is that of Peflin from Homo sapiens (Human).